Reading from the N-terminus, the 213-residue chain is High frequency lysogenization protein HflD homolog (213 aa).

Belongs to the HflD family.

Its subcellular location is the cytoplasm. It is found in the cell inner membrane. This Klebsiella pneumoniae (strain 342) protein is High frequency lysogenization protein HflD homolog.